A 268-amino-acid chain; its full sequence is Eukaryotic translation initiation factor 3 subunit J (268 aa).

Disordered stretches follow at residues 1 to 27 (MSWDDEEFEVRTSTKDQPMVVSWDDEF), 40 to 63 (DAEEVPKQKQKPKAAPKAAKKVDK), and 217 to 249 (LAKVKGGTATGGAGKKKAKAARPNLGGAFKKDQ). Basic residues predominate over residues 47–58 (QKQKPKAAPKAA). Residues 191–221 (IESIRQTVATLNVLIKEKERQERQARLAKVK) are a coiled coil.

Belongs to the eIF-3 subunit J family. In terms of assembly, component of the eukaryotic translation initiation factor 3 (eIF-3) complex.

The protein resides in the cytoplasm. In terms of biological role, component of the eukaryotic translation initiation factor 3 (eIF-3) complex, which is involved in protein synthesis of a specialized repertoire of mRNAs and, together with other initiation factors, stimulates binding of mRNA and methionyl-tRNAi to the 40S ribosome. The eIF-3 complex specifically targets and initiates translation of a subset of mRNAs involved in cell proliferation. In Eremothecium gossypii (strain ATCC 10895 / CBS 109.51 / FGSC 9923 / NRRL Y-1056) (Yeast), this protein is Eukaryotic translation initiation factor 3 subunit J.